The chain runs to 487 residues: DEAD-box ATP-dependent RNA helicase CshA (487 aa).

A Q motif motif is present at residues 3-31 (ITFQDFQLSSDLTKAIKRMGFEEATPIQA). The 171-residue stretch at 34-204 (IPLGLANKDV…ERFMTNPEHV (171 aa)) folds into the Helicase ATP-binding domain. 47-54 (AQTGTGKT) provides a ligand contact to ATP. Positions 152-155 (DEAD) match the DEAD box motif. The Helicase C-terminal domain occupies 215 to 375 (NIQQFYLEVH…RMKAPTLDEA (161 aa)). Basic and acidic residues predominate over residues 428 to 440 (DNTPVRLTEEAPL). The tract at residues 428–487 (DNTPVRLTEEAPLRTKRNKNHHHRSSKRRDGGGYRGKNNRSSYDKKRSSNDRRQKKSYNS) is disordered. Residues 441-454 (RTKRNKNHHHRSSK) show a composition bias toward basic residues. The span at 469–479 (SYDKKRSSNDR) shows a compositional bias: basic and acidic residues.

It belongs to the DEAD box helicase family. CshA subfamily. Oligomerizes, may be a member of the RNA degradosome.

Its subcellular location is the cytoplasm. The catalysed reaction is ATP + H2O = ADP + phosphate + H(+). Functionally, DEAD-box RNA helicase possibly involved in RNA degradation. Unwinds dsRNA in both 5'- and 3'-directions, has RNA-dependent ATPase activity. The chain is DEAD-box ATP-dependent RNA helicase CshA from Bacillus licheniformis (strain ATCC 14580 / DSM 13 / JCM 2505 / CCUG 7422 / NBRC 12200 / NCIMB 9375 / NCTC 10341 / NRRL NRS-1264 / Gibson 46).